A 177-amino-acid polypeptide reads, in one-letter code: Basic form of pathogenesis-related protein 1 (177 aa).

The signal sequence occupies residues 1 to 23 (MGFLTTIVACFITFAILIHSSKA). Position 24 is a pyrrolidone carboxylic acid (Q24). Residues 31–147 (LNPHNAARRQ…NGWFFITCNY (117 aa)) enclose the SCP domain.

This sequence belongs to the CRISP family. Post-translationally, two disulfide bonds are present.

Functionally, probably involved in the defense reaction of plants against pathogens. This is Basic form of pathogenesis-related protein 1 from Nicotiana tabacum (Common tobacco).